A 347-amino-acid polypeptide reads, in one-letter code: Phospho-N-acetylmuramoyl-pentapeptide-transferase (347 aa).

10 consecutive transmembrane segments (helical) span residues 10 to 30 (SLVF…IFLG), 67 to 87 (AGGI…LPLG), 91 to 111 (TWLF…DDIV), 127 to 147 (FVLQ…IYKG), 164 to 184 (LGHS…AIVG), 195 to 215 (LDGL…VVAV), 220 to 240 (IPLA…SLAF), 250 to 270 (VFMG…CAVM), 275 to 295 (LLLI…ILQI), and 325 to 345 (VVKR…IAAL).

It belongs to the glycosyltransferase 4 family. MraY subfamily. It depends on Mg(2+) as a cofactor.

The protein localises to the cell inner membrane. It catalyses the reaction UDP-N-acetyl-alpha-D-muramoyl-L-alanyl-gamma-D-glutamyl-meso-2,6-diaminopimeloyl-D-alanyl-D-alanine + di-trans,octa-cis-undecaprenyl phosphate = di-trans,octa-cis-undecaprenyl diphospho-N-acetyl-alpha-D-muramoyl-L-alanyl-D-glutamyl-meso-2,6-diaminopimeloyl-D-alanyl-D-alanine + UMP. It participates in cell wall biogenesis; peptidoglycan biosynthesis. Its function is as follows. Catalyzes the initial step of the lipid cycle reactions in the biosynthesis of the cell wall peptidoglycan: transfers peptidoglycan precursor phospho-MurNAc-pentapeptide from UDP-MurNAc-pentapeptide onto the lipid carrier undecaprenyl phosphate, yielding undecaprenyl-pyrophosphoryl-MurNAc-pentapeptide, known as lipid I. The sequence is that of Phospho-N-acetylmuramoyl-pentapeptide-transferase from Chlamydia abortus (strain DSM 27085 / S26/3) (Chlamydophila abortus).